Here is a 24-residue protein sequence, read N- to C-terminus: Humanin-like 6 (24 aa).

It belongs to the humanin family. Expressed in skeletal muscle and testis.

It is found in the secreted. The protein resides in the cytoplasm. Functionally, plays a role as a neuroprotective and antiapoptotic factor. This chain is Humanin-like 6, found in Homo sapiens (Human).